Here is a 267-residue protein sequence, read N- to C-terminus: Thyroxine 5-deiodinase (267 aa).

Topologically, residues 1–15 are cytoplasmic; the sequence is MHDSGGVQMARALKH. Residues 16 to 36 traverse the membrane as a helical; Signal-anchor for type II membrane protein segment; the sequence is AALCLMLLPRFLLAAVMLWLL. The Extracellular portion of the chain corresponds to 37–267; that stretch reads DFLCIRKKVL…VNSQTAVLHV (231 aa). The active site involves Sec-131. A non-standard amino acid (selenocysteine) is located at residue Sec-131.

This sequence belongs to the iodothyronine deiodinase family. As to quaternary structure, monomer. Homodimer. May undergo minor heretodimerization with DIO1 and DIO2.

Its subcellular location is the cell membrane. It localises to the endosome membrane. It catalyses the reaction 3,3',5'-triiodo-L-thyronine + iodide + A + H(+) = L-thyroxine + AH2. It carries out the reaction 3,3'-diiodo-L-thyronine + iodide + A + H(+) = 3,3',5-triiodo-L-thyronine + AH2. The catalysed reaction is 3-iodo-L-thyronine + iodide + A + H(+) = 3,5-diiodo-L-thyronine + AH2. The enzyme catalyses L-thyronine + iodide + A + H(+) = 3-iodo-L-thyronine + AH2. It catalyses the reaction 3',5'-diiodo-L-thyronine + iodide + A + H(+) = 3,3',5'-triiodo-L-thyronine + AH2. It carries out the reaction 3'-iodo-L-thyronine + iodide + A + H(+) = 3,3'-diiodo-L-thyronine + AH2. The catalysed reaction is 3,3',5'-triiodothyronamine + iodide + A + H(+) = 3,3',5,5'-tetraiodothyronamine + AH2. The enzyme catalyses 3',5'-diiodothyronamine + iodide + A + H(+) = 3,3',5'-triiodothyronamine + AH2. It catalyses the reaction 3,3'-diiodothyronamine + iodide + A + H(+) = 3,3',5-triiodothyronamine + AH2. It carries out the reaction 3-iodothyronamine + iodide + A + H(+) = 3,5-diiodothyronamine + AH2. The catalysed reaction is 3'-iodothyronamine + iodide + A + H(+) = 3,3'-diiodothyronamine + AH2. The enzyme catalyses thyronamine + iodide + A + H(+) = 3-iodothyronamine + AH2. In terms of biological role, plays a crucial role in the metabolism of thyroid hormones (TH) and has specific roles in TH activation and inactivation by deiodination. Catalyzes the deiodination of L-thyroxine (T4) to 3,3',5'-triiodothyronine (rT3), 3,5,3'-triiodothyronine (T3) to 3,3'-diiodothyronine (3,3'-T2), 3,5-diiodothyronine (3,5-T2) to 3-monoiodothyronine (3-T1), rT3 to 3',5'-diiodothyronine (3',5'-T2) and 3,3'-T2 to 3'-monoiodothyronine (3'-T1) via inner-ring deiodination (IRD). Catalyzes the deiodination of 3-T1 to L-thyronine (T0) via outer-ring deiodination (ORD). Catalyzes the tyrosyl ring deiodinations of 3,3',5,5'-tetraiodothyronamine, 3,3',5'-triiodothyronamine, 3,5,3'-triiodothyronamine, 3,5-diiodothyronamine, 3,3'-diiodothyronamine and 3-iodothyronamine. The polypeptide is Thyroxine 5-deiodinase (dio3) (Sparus aurata (Gilthead sea bream)).